Reading from the N-terminus, the 135-residue chain is Salivary protein 15 (135 aa).

A signal peptide spans 1–21 (MESFVAMKVVCILFLVGVVAA). N22 carries N-linked (GlcNAc...) asparagine glycosylation. The segment at 48–67 (PNYISNHQKLALKLLKICKD) is required for Borrelia OspC-binding. 2 N-linked (GlcNAc...) asparagine glycosylation sites follow: N92 and N104. The tract at residues 116 to 135 (GPNGQTCAEKNKCVGHIPGC) is CD4-binding.

The protein belongs to the salp15 family. As to quaternary structure, monomer. Interacts with host CD4. Interacts with host DC-SIGN (CD209). In terms of assembly, (Microbial infection) Interacts with Borrelia outer surface protein C (OspC). Post-translationally, glycosylated. As to expression, expressed in salivary glands. Detected in host skin, at the site of natural inoculation.

It localises to the secreted. Functionally, salivary tick protein that downregulates host immune system by binding to both dendritic cells, and CD4(+) T cells. Specifically binds to the CD4 coreceptor on T cells. This interaction prevents the activation of the Src kinase, Lck, and its downstream substrate Zap-70, and results in deficient activation of PLCgamma1, the repression of calcium fluxes triggered by T-cell antigen receptor (TCR) ligation, and a subsequent reduction in interleukin-2 production. This salivary protein also binds to DC-SIGN (CD209) on dendritic cells (DC) and activates the Raf-1 kinase/MEK signaling pathway that results in down-regulating expression of pro-inflammatory cytokines. Furthermore, it inhibits T cell proliferation induced by DCs. It also inhibits in vitro keratinocyte inflammation induced by Borrelia burgdorferi or by the major outer surface protein (OspC) of Borrelia. In addition, it downregulates chemokines and monocyte chemoattractant protein 1, as well as several antimicrobial peptides such as defensins, cathelicidin, psoriasin, and RNase 7. Apart from its immunomodulatory activities, it is also associated with protection of Borrelia spirochetes from antibody-mediated killing through its binding to OspC. In vivo, tests on different immune disease animal models show promising therapeutic results, e.g., in inhibiting HIV infection, experimental autoimmune encephalomyelitis, transplantation rejection, and asthma. Its function is as follows. (Microbial infection) Protects Borrelia garinii (strains A87S and VSBP) from host complement-mediated killing. In terms of biological role, (Microbial infection) Partially protects Borrelia burgdorferi (strains VS215 and B31) from host complement-mediated killing. This Ixodes scapularis (Black-legged tick) protein is Salivary protein 15.